A 197-amino-acid polypeptide reads, in one-letter code: Probable GTP-binding protein EngB (197 aa).

One can recognise an EngB-type G domain in the interval 22–195 (NLPEIAFVGR…VDYLFDDLVE (174 aa)). GTP is bound by residues 30 to 37 (GRSNVGKS), 57 to 61 (GKTRL), 75 to 78 (DLPG), 142 to 145 (TKSD), and 174 to 176 (FSS). Mg(2+) contacts are provided by Ser-37 and Thr-59.

Belongs to the TRAFAC class TrmE-Era-EngA-EngB-Septin-like GTPase superfamily. EngB GTPase family. It depends on Mg(2+) as a cofactor.

Its function is as follows. Necessary for normal cell division and for the maintenance of normal septation. This Clostridium perfringens (strain 13 / Type A) protein is Probable GTP-binding protein EngB.